The following is a 378-amino-acid chain: Odorant receptor Or2 (378 aa).

A topological domain (cytoplasmic) is located at residue methionine 1. A helical transmembrane segment spans residues 2–22 (LIEECPIIGVNVRVWLFWSYL). The Extracellular portion of the chain corresponds to 23 to 29 (RRPRLSR). The chain crosses the membrane as a helical span at residues 30–50 (FLVGCIPVAVLNVFQFLKLYS). The Cytoplasmic portion of the chain corresponds to 51 to 59 (SWGDMSELI). Residues 60–80 (INGYFTVLYFNLVLRTSFLVI) traverse the membrane as a helical segment. Residues 81-120 (NRRKFETFFEGVAAEYALLEKNDDIRPVLERYTRRGRMLS) are Extracellular-facing. Residues 121 to 141 (ISNLWLGAFISACFVTYPLFV) traverse the membrane as a helical segment. The Cytoplasmic segment spans residues 142-164 (PGRGLPYGVTIPGVDVLATPTYQ). Residues 165 to 185 (VVFVLQVYLTFPACCMYIPFT) form a helical membrane-spanning segment. At 186 to 254 (SFYATCTLFA…HDLNSLVTHL (69 aa)) the chain is on the extracellular side. A helical transmembrane segment spans residues 255-275 (CLLEFLSFGMMLCALLFLLSI). Residues 276–278 (SNQ) are Cytoplasmic-facing. The chain crosses the membrane as a helical span at residues 279–299 (LAQMIMIGSYIFMILSQMFAF). The Extracellular portion of the chain corresponds to 300-378 (YWHANEVLEQ…YFTLLRRVYN (79 aa)). Asparagine 364 is a glycosylation site (N-linked (GlcNAc...) asparagine).

The protein belongs to the insect chemoreceptor superfamily. Heteromeric odorant receptor channel (TC 1.A.69) family. Or30a subfamily. Expressed in male and female antennae and maxillary palps.

The protein localises to the cell membrane. In terms of biological role, odorant receptor which plays a critical role in the anthropophilic host-seeking behavior; establishes the host preference to transmit malaria. This Anopheles gambiae (African malaria mosquito) protein is Odorant receptor Or2 (OR2).